The chain runs to 440 residues: Thymidine phosphorylase (440 aa).

The protein belongs to the thymidine/pyrimidine-nucleoside phosphorylase family. Homodimer.

It carries out the reaction thymidine + phosphate = 2-deoxy-alpha-D-ribose 1-phosphate + thymine. It functions in the pathway pyrimidine metabolism; dTMP biosynthesis via salvage pathway; dTMP from thymine: step 1/2. Functionally, the enzymes which catalyze the reversible phosphorolysis of pyrimidine nucleosides are involved in the degradation of these compounds and in their utilization as carbon and energy sources, or in the rescue of pyrimidine bases for nucleotide synthesis. The polypeptide is Thymidine phosphorylase (Yersinia pestis).